The primary structure comprises 612 residues: Kelch repeat and BTB domain-containing protein 3 (612 aa).

A BTB domain is found at 52–119 (YDFKIIMKDE…AYTGKTKITD (68 aa)). A BACK domain is found at 154 to 254 (CLQLLSISDS…QLSEETLQDC (101 aa)). Kelch repeat units lie at residues 295-341 (KYIF…SSYG), 343-403 (KIFL…MALD), 404-454 (RLFV…TCQN), 456-506 (IYVL…KAVP), and 552-599 (KIYI…VIQF).

This is Kelch repeat and BTB domain-containing protein 3 from Homo sapiens (Human).